A 413-amino-acid polypeptide reads, in one-letter code: MAP kinase-interacting serine/threonine-protein kinase 1 (413 aa).

The disordered stretch occupies residues 1-26; that stretch reads MGSSEPLPIVDSDKRRKKKRKTRATD. The residue at position 22 (threonine 22) is a Phosphothreonine; by PAK2. The residue at position 27 (serine 27) is a Phosphoserine; by PAK2. Residues 37–321 enclose the Protein kinase domain; that stretch reads QLTSELLGEG…AAQVLQHPWV (285 aa). Residues 43–51 and lysine 66 contribute to the ATP site; that span reads LGEGAYAKV. The active-site Proton acceptor is aspartate 158. Serine 168 and serine 173 each carry phosphoserine. Phosphothreonine occurs at positions 197, 202, and 332.

It belongs to the protein kinase superfamily. CAMK Ser/Thr protein kinase family. Interacts with the C-terminal regions of EIF4G1 and EIF4G2. Also binds to dephosphorylated ERK1 and ERK2, and to the p38 kinases. Mg(2+) serves as cofactor. In terms of processing, dual phosphorylation of Thr-197 and Thr-202 activates the kinase. Phosphorylation of Thr-332 activates the kinase. MAPK3/ERK1 is one of the kinases which activate MKNK1/MNK1. Phosphorylation by PAK2 leads to a reduced phosphorylation of EIF4G1.

The catalysed reaction is L-seryl-[protein] + ATP = O-phospho-L-seryl-[protein] + ADP + H(+). It catalyses the reaction L-threonyl-[protein] + ATP = O-phospho-L-threonyl-[protein] + ADP + H(+). Its activity is regulated as follows. Phosphorylated and activated by the p38 kinases and kinases in the Erk pathway. Its function is as follows. May play a role in the response to environmental stress and cytokines. Appears to regulate translation by phosphorylating EIF4E, thus increasing the affinity of this protein for the 7-methylguanosine-containing mRNA cap. This Rattus norvegicus (Rat) protein is MAP kinase-interacting serine/threonine-protein kinase 1 (Mknk1).